A 285-amino-acid chain; its full sequence is ATP synthase gamma chain (285 aa).

The protein belongs to the ATPase gamma chain family. As to quaternary structure, F-type ATPases have 2 components, CF(1) - the catalytic core - and CF(0) - the membrane proton channel. CF(1) has five subunits: alpha(3), beta(3), gamma(1), delta(1), epsilon(1). CF(0) has three main subunits: a, b and c.

It is found in the cell membrane. Its function is as follows. Produces ATP from ADP in the presence of a proton gradient across the membrane. The gamma chain is believed to be important in regulating ATPase activity and the flow of protons through the CF(0) complex. The chain is ATP synthase gamma chain from Dehalococcoides mccartyi (strain ATCC BAA-2266 / KCTC 15142 / 195) (Dehalococcoides ethenogenes (strain 195)).